We begin with the raw amino-acid sequence, 308 residues long: Large ribosomal subunit protein mL38 (308 aa).

The N-terminal 17 residues, 1–17, are a transit peptide targeting the mitochondrion; the sequence is MKRVWPRIPTISNVCRA.

It belongs to the phosphatidylethanolamine-binding protein family. Mitochondrion-specific ribosomal protein mL38 subfamily. Component of the mitochondrial large ribosomal subunit (mt-LSU). Mature yeast 74S mitochondrial ribosomes consist of a small (37S) and a large (54S) subunit. The 37S small subunit contains a 15S ribosomal RNA (15S mt-rRNA) and at least 32 different proteins. The 54S large subunit contains a 21S rRNA (21S mt-rRNA) and at least 45 different proteins.

It localises to the mitochondrion. Its function is as follows. Component of the mitochondrial ribosome (mitoribosome), a dedicated translation machinery responsible for the synthesis of mitochondrial genome-encoded proteins, including at least some of the essential transmembrane subunits of the mitochondrial respiratory chain. The mitoribosomes are attached to the mitochondrial inner membrane and translation products are cotranslationally integrated into the membrane. The sequence is that of Large ribosomal subunit protein mL38 (mrpl35) from Schizosaccharomyces pombe (strain 972 / ATCC 24843) (Fission yeast).